The chain runs to 644 residues: Exoribonuclease 2 (644 aa).

Residues 189-516 (REDLTSLDFV…NHRLLKAVIK (328 aa)) form the RNB domain. In terms of domain architecture, S1 motif spans 561-643 (GTRFAAEIVD…ETRSIIARPV (83 aa)).

It belongs to the RNR ribonuclease family. RNase II subfamily.

The protein localises to the cytoplasm. It carries out the reaction Exonucleolytic cleavage in the 3'- to 5'-direction to yield nucleoside 5'-phosphates.. In terms of biological role, involved in mRNA degradation. Hydrolyzes single-stranded polyribonucleotides processively in the 3' to 5' direction. The polypeptide is Exoribonuclease 2 (Shigella flexneri).